The sequence spans 653 residues: MCSKRELRMLMLHYSKHGECILQEIGAAFRGEHATDLLLICDGKETVRAHKLVLAAASPLIRMILEETPVLDGVTTVYFPEVQVSYFRLLLDFLYSGQVYVRSVEEYHHLQDLLALLQIKASIWKNSDGSGEGEPRKSEPLVDINRNTEGITGSSVVHQHPSRRRRSKSQDSLSGDSASGGGGTGSQAGTPKKVSVKSERHSAGSSVDGDGDRDREENLEYLDEVEEAIIKSNNNHPLHPHQHHLVAGSGGHHHHHHHHHHHRQLHQIKTRSRRSDPSANRRRSSSDPVNLSIVKQQQDVDSDDANIDVETIGTATTKTLLPPRYLDPFRTKRKAAAYYIHPADAEALKPMDHEGLLHNSPDNYVVTPHRKRRPGFHNSPAQNPPFVPSYLDDLRARSKCFLSAPPTYLPELRPGSPTSVRHAEIAAGLSNNNNSSSNNNNNNNRIRPPSADNKLAVAPFVYPWPTAALAGLPGGPSDLLGLPYVHGGGPNAETSPADLLQQMKNFENSQAELSARASAAGGGGGGSGGNGSGSGGVASGGGGGSMGGNTAVREYRCEYCGKTFGMSWNLKTHLRVHTGEKPFACRLCVAMFKQKAHLLKHLCSVHRNIINAPEAGGRYTCCFCSLVFETLQELVRHLSGHHNNLLLSKNLHE.

The BTB domain maps to 35–103 (TDLLLICDGK…LYSGQVYVRS (69 aa)). Disordered regions lie at residues 126–215 (NSDG…DRDR), 234–305 (NNHP…SDDA), 429–451 (LSNNNNSSSNNNNNNNRIRPPSA), and 512–534 (ELSARASAAGGGGGGSGGNGSGS). A compositionally biased stretch (polar residues) spans 145–157 (NRNTEGITGSSVV). Residues 251-272 (GHHHHHHHHHHHRQLHQIKTRS) show a composition bias toward basic residues. The span at 286 to 299 (SDPVNLSIVKQQQD) shows a compositional bias: polar residues. Over residues 430 to 444 (SNNNNSSSNNNNNNN) the composition is skewed to low complexity. Over residues 520 to 534 (AGGGGGGSGGNGSGS) the composition is skewed to gly residues. 3 consecutive C2H2-type zinc fingers follow at residues 555-577 (YRCEYCGKTFGMSWNLKTHLRVH), 583-606 (FACRLCVAMFKQKAHLLKHLCSVH), and 619-641 (YTCCFCSLVFETLQELVRHLSGH).

It localises to the nucleus. Transcription factor required for terminalia development. Negative regulator of the JAK/STAT pathway: represses JAK/STAT-dependent expression of ventral veins lacking (vvl) in the posterior spiracles. The sequence is that of Transcription factor Ken 1 from Culex quinquefasciatus (Southern house mosquito).